A 465-amino-acid chain; its full sequence is GTPase Der (465 aa).

EngA-type G domains lie at 3-167 (PLVA…PEEG) and 179-352 (VRIA…ASAT). GTP is bound by residues 9–16 (GRPNVGKS), 57–61 (DTGGI), 119–122 (NKID), 185–192 (GRPNVGKS), 232–236 (DTAGL), and 297–300 (NKWD). A KH-like domain is found at 353 to 437 (HEFSTSEVNQ…PVRFIFREGA (85 aa)).

The protein belongs to the TRAFAC class TrmE-Era-EngA-EngB-Septin-like GTPase superfamily. EngA (Der) GTPase family. In terms of assembly, associates with the 50S ribosomal subunit.

GTPase that plays an essential role in the late steps of ribosome biogenesis. This chain is GTPase Der, found in Xanthomonas campestris pv. campestris (strain 8004).